The primary structure comprises 165 residues: Probable bacterial non-heme ferritin-like protein (165 aa).

Residues 1–145 (MLSENVVKLL…SILDKLNFLG (145 aa)) enclose the Ferritin-like diiron domain. 5 residues coordinate Fe cation: Glu-17, Glu-50, His-53, Glu-94, and Gln-127.

This sequence belongs to the ferritin family. Prokaryotic subfamily.

It localises to the cytoplasm. In Haemophilus influenzae (strain ATCC 51907 / DSM 11121 / KW20 / Rd), this protein is Probable bacterial non-heme ferritin-like protein (ftnB).